A 417-amino-acid chain; its full sequence is Serine hydroxymethyltransferase (417 aa).

Residues Leu121 and 125 to 127 contribute to the (6S)-5,6,7,8-tetrahydrofolate site; that span reads GHL. An N6-(pyridoxal phosphate)lysine modification is found at Lys230. Residue 355-357 participates in (6S)-5,6,7,8-tetrahydrofolate binding; it reads SPF.

The protein belongs to the SHMT family. In terms of assembly, homodimer. Requires pyridoxal 5'-phosphate as cofactor.

The protein resides in the cytoplasm. The enzyme catalyses (6R)-5,10-methylene-5,6,7,8-tetrahydrofolate + glycine + H2O = (6S)-5,6,7,8-tetrahydrofolate + L-serine. It functions in the pathway one-carbon metabolism; tetrahydrofolate interconversion. The protein operates within amino-acid biosynthesis; glycine biosynthesis; glycine from L-serine: step 1/1. Catalyzes the reversible interconversion of serine and glycine with tetrahydrofolate (THF) serving as the one-carbon carrier. This reaction serves as the major source of one-carbon groups required for the biosynthesis of purines, thymidylate, methionine, and other important biomolecules. Also exhibits THF-independent aldolase activity toward beta-hydroxyamino acids, producing glycine and aldehydes, via a retro-aldol mechanism. The polypeptide is Serine hydroxymethyltransferase (Marinobacter nauticus (strain ATCC 700491 / DSM 11845 / VT8) (Marinobacter aquaeolei)).